We begin with the raw amino-acid sequence, 308 residues long: MALIQHGSVSGTSAVRLSFSSSVSPPSSSPPLSRVSLNFQSEKKSCYRRMICRAMVQDSVQGIPSVYAREMERLSAKESLILAFNDAGGFEALVTGKITDMQKIDVNERITNLERLNPTPRPTTSPYLEGRWSFEWFGVNTPGSLAVRVMFERFPSTLVSLSNMEIFIKDNNTKATANIKLLNSIENKITLSSKLTIEGPLRMKEEYLEGLLESPTVIEEAVPDQLRGLLGQATTTLQQLPEPIKDTLANGLRIPLGGTYQRFFMISYLDDEILIVRDTAGVPEVLTRVETSSPMSSSSVVENLEYNS.

The N-terminal 55 residues, 1–55 (MALIQHGSVSGTSAVRLSFSSSVSPPSSSPPLSRVSLNFQSEKKSCYRRMICRAM), are a transit peptide targeting the chloroplast.

It belongs to the PAP/fibrillin family.

Its subcellular location is the plastid. The protein localises to the chloroplast. It localises to the plastoglobule. The chain is Probable plastid-lipid-associated protein 9, chloroplastic (PAP9) from Arabidopsis thaliana (Mouse-ear cress).